An 83-amino-acid polypeptide reads, in one-letter code: Short neurotoxin II (83 aa).

Residues 1–21 form the signal peptide; sequence MKTLLLTLVVVTVVCLDLGYT. Cystine bridges form between Cys24/Cys45, Cys38/Cys62, Cys64/Cys75, and Cys76/Cys81.

The protein belongs to the three-finger toxin family. Short-chain subfamily. Type I alpha-neurotoxin sub-subfamily. As to expression, expressed by the venom gland.

The protein resides in the secreted. In terms of biological role, binds to muscle nicotinic acetylcholine receptor (nAChR) and inhibit acetylcholine from binding to the receptor, thereby impairing neuromuscular transmission. This chain is Short neurotoxin II, found in Laticauda colubrina (Yellow-lipped sea krait).